The following is a 777-amino-acid chain: Semaphorin-3D (777 aa).

The signal sequence occupies residues 1-37; the sequence is MNVTKDENPRSRSQDLHLFHAWMMLIMTVLFLPVTET. Residues 44-531 form the Sema domain; sequence RLKLTYKDLL…SWDGLVQLSL (488 aa). A disulfide bond links Cys117 and Cys128. Residue Asn139 is glycosylated (N-linked (GlcNAc...) asparagine). 4 cysteine pairs are disulfide-bonded: Cys146/Cys155, Cys286/Cys398, Cys310/Cys358, and Cys534/Cys552. In terms of domain architecture, PSI spans 533-585; the sequence is RCDTYGKACADCCLARDPYCAWDGNACSRYAPTSKRRARRQDVKYGDPITQCW. The Ig-like C2-type domain maps to 592 to 680; it reads SHETADEKVI…TFIHTIVKLT (89 aa). N-linked (GlcNAc...) asparagine glycans are attached at residues Asn607 and Asn724. Cys665 and Cys731 are disulfide-bonded. Residues 740 to 765 show a composition bias toward basic residues; sequence RRQRNKGSPKWKHMQEMKKKRNRRHH. Residues 740–777 are disordered; that stretch reads RRQRNKGSPKWKHMQEMKKKRNRRHHRDLDELQRSVAT. Positions 766 to 777 are enriched in basic and acidic residues; it reads RDLDELQRSVAT.

Belongs to the semaphorin family.

It localises to the secreted. In terms of biological role, induces the collapse and paralysis of neuronal growth cones. Could potentially act as repulsive cues toward specific neuronal populations. Binds to neuropilin. This chain is Semaphorin-3D (Sema3d), found in Mus musculus (Mouse).